Reading from the N-terminus, the 98-residue chain is MTLIHMNIFMAFTMSLTGFLMYRSHLMSALLCLEGMILSLFILVTLTVLNLHLTLAKMMPIILLVFAACEAAIGLALLVKISNTYGTDYVQNLNLLQC.

The next 3 helical transmembrane spans lie at 1-21 (MTLI…GFLM), 29-49 (ALLC…LTVL), and 59-79 (MPII…ALLV).

It belongs to the complex I subunit 4L family. Core subunit of respiratory chain NADH dehydrogenase (Complex I) which is composed of 45 different subunits.

The protein resides in the mitochondrion inner membrane. It carries out the reaction a ubiquinone + NADH + 5 H(+)(in) = a ubiquinol + NAD(+) + 4 H(+)(out). Core subunit of the mitochondrial membrane respiratory chain NADH dehydrogenase (Complex I) which catalyzes electron transfer from NADH through the respiratory chain, using ubiquinone as an electron acceptor. Part of the enzyme membrane arm which is embedded in the lipid bilayer and involved in proton translocation. The protein is NADH-ubiquinone oxidoreductase chain 4L (MT-ND4L) of Inia geoffrensis (Amazon river dolphin).